The primary structure comprises 536 residues: B3 domain-containing protein Os03g0619800 (536 aa).

Positions 26 to 119 form a DNA-binding region, TF-B3 1; that stretch reads MRCFLRRMAA…RYEVLILDSD (94 aa). Residues 138–199 are disordered; the sequence is DKTVDPVDSS…VEPQTPSGSD (62 aa). 2 stretches are compositionally biased toward low complexity: residues 145 to 160 and 171 to 183; these read DSSG…SSRS and SSSE…SPSG. Positions 231 to 330 form a DNA-binding region, TF-B3 2; that stretch reads VAVMKKCNLQ…AFTVHLLQAE (100 aa). Residues 335 to 396 form a disordered region; that stretch reads RDGTDVHKIG…SDGPSEPPYI (62 aa). Over residues 344 to 355 the composition is skewed to polar residues; sequence GSSQNKRNSKMA. Positions 372-382 are enriched in basic and acidic residues; that stretch reads SNKHGVSHESL. Residues 429–529 constitute a DNA-binding region (TF-B3 3); sequence ISKLAGSGGK…TMEVHIISNL (101 aa).

The protein resides in the nucleus. The protein is B3 domain-containing protein Os03g0619800 of Oryza sativa subsp. japonica (Rice).